Reading from the N-terminus, the 132-residue chain is Mercuric resistance operon regulatory protein (132 aa).

The HTH merR-type domain maps to 2–71 (KFRIGELADK…LNEIDKLLGV (70 aa)). A DNA-binding region (H-T-H motif) is located at residues 5-24 (IGELADKCGVNKETIRYYER). Hg(2+)-binding residues include Cys79, Cys114, and Cys123.

Homodimer.

In terms of biological role, mediates the mercuric-dependent induction of mercury resistance operon. In the absence of mercury MerR represses transcription by binding tightly to the mer operator region; when mercury is present the dimeric complex binds a single ion and becomes a potent transcriptional activator, while remaining bound to the mer site. The protein is Mercuric resistance operon regulatory protein (merR1) of Bacillus cereus.